Consider the following 906-residue polypeptide: Cadherin-2A (906 aa).

Positions 1 to 28 (MCRKEPFLLPTALCILAALVLHQGPVEA) are cleaved as a signal peptide. Positions 29–160 (LGGSRLCKTG…KHNGLQRQKR (132 aa)) are excised as a propeptide. Cadherin domains are found at residues 161–268 (DWVI…RPEF), 269–383 (LHQI…PPEF), 384–498 (TAMT…NPYF), 499–604 (TPNP…DNAP), and 605–714 (YVYP…TTAP). Topologically, residues 161–724 (DWVIPPINVP…IIGTGLGTGA (564 aa)) are extracellular. Ca(2+)-binding residues include Glu171, Asp227, Glu229, Asp260, Met261, Asn262, Asp263, and Asn264. The N-linked (GlcNAc...) asparagine glycan is linked to Asn274. 3 residues coordinate Ca(2+): Asp294, Asp296, and Asn302. Asn326 carries an N-linked (GlcNAc...) asparagine glycan. Residue Asp354 coordinates Ca(2+). Asn403, Asn573, Asn623, Asn652, and Asn693 each carry an N-linked (GlcNAc...) asparagine glycan. A helical membrane pass occupies residues 725–746 (IIAILLCIIILLTLVLMFVVWM). Topologically, residues 747 to 906 (KRRDKERQAK…LADMYGGSDD (160 aa)) are cytoplasmic. Disordered regions lie at residues 775–800 (EEGGGEEDQDYDLSQLQQPDTVEPDT) and 863–884 (SGSTAGSLSSLNSSSSGGEQDY). Residues 776–785 (EGGGEEDQDY) show a composition bias toward acidic residues. Low complexity predominate over residues 863 to 880 (SGSTAGSLSSLNSSSSGG).

Homodimer (via extracellular region). Can also form heterodimers with other cadherins (via extracellular region). Dimerization occurs in trans, i.e. with a cadherin chain from another cell.

Its subcellular location is the cell membrane. The protein localises to the sarcolemma. The protein resides in the cell junction. It localises to the cell surface. It is found in the desmosome. Its subcellular location is the adherens junction. Functionally, calcium-dependent cell adhesion protein; preferentially mediates homotypic cell-cell adhesion. Cadherins may thus contribute to the sorting of heterogeneous cell types, and thereby play an important role during embryonic development. Required for proper neurite branching. Required for pre- and postsynaptic organization. In Xenopus laevis (African clawed frog), this protein is Cadherin-2A (cdh2-a).